Here is a 472-residue protein sequence, read N- to C-terminus: Eukaryotic translation initiation factor 2 subunit 3 (472 aa).

The residue at position 2 (alanine 2) is an N-acetylalanine; partial. A tr-type G domain is found at 39–247; sequence QATINIGTIG…YIVKKIPVPL (209 aa). Positions 48 to 55 are G1; sequence GHVAHGKS. 51–56 provides a ligand contact to GTP; that stretch reads AHGKST. The tract at residues 76–80 is G2; that stretch reads NITIK. The G3 stretch occupies residues 134–137; the sequence is DCPG. GTP contacts are provided by residues 190–193 and 225–227; these read NKID and SAQ. The segment at 190 to 193 is G4; that stretch reads NKID. The interval 225-227 is G5; that stretch reads SAQ. The interval 457–469 is interacts with CDC123; sequence GQIRRGVTIKPTV.

Belongs to the TRAFAC class translation factor GTPase superfamily. Classic translation factor GTPase family. EIF2G subfamily. As to quaternary structure, eukaryotic translation initiation factor 2 eIF2 is a heterotrimeric complex composed of an alpha (EIF2S1), a beta (EIF2S2) and a gamma (EIF2S3) chain. eIF2 is member of the 43S pre-initiation complex (43S PIC).

It localises to the cytoplasm. It is found in the cytosol. The catalysed reaction is GTP + H2O = GDP + phosphate + H(+). Functionally, member of the eIF2 complex that functions in the early steps of protein synthesis by forming a ternary complex with GTP and initiator tRNA. This complex binds to a 40S ribosomal subunit, followed by mRNA binding to form the 43S pre-initiation complex (43S PIC). Junction of the 60S ribosomal subunit to form the 80S initiation complex is preceded by hydrolysis of the GTP bound to eIF2 and release of an eIF2-GDP binary complex. In order for eIF2 to recycle and catalyze another round of initiation, the GDP bound to eIF2 must exchange with GTP by way of a reaction catalyzed by eIF-2B. The protein is Eukaryotic translation initiation factor 2 subunit 3 (EIF2S3) of Gallus gallus (Chicken).